Here is a 266-residue protein sequence, read N- to C-terminus: NAD kinase 2 (266 aa).

Aspartate 51 acts as the Proton acceptor in catalysis. NAD(+) is bound by residues 51–52, 123–124, arginine 150, aspartate 152, 163–168, and alanine 187; these read DG, NE, and TGYSKS.

It belongs to the NAD kinase family. Requires a divalent metal cation as cofactor.

It localises to the cytoplasm. It carries out the reaction NAD(+) + ATP = ADP + NADP(+) + H(+). In terms of biological role, involved in the regulation of the intracellular balance of NAD and NADP, and is a key enzyme in the biosynthesis of NADP. Catalyzes specifically the phosphorylation on 2'-hydroxyl of the adenosine moiety of NAD to yield NADP. This Oceanobacillus iheyensis (strain DSM 14371 / CIP 107618 / JCM 11309 / KCTC 3954 / HTE831) protein is NAD kinase 2.